The chain runs to 338 residues: Lipoate-protein ligase A (338 aa).

The BPL/LPL catalytic domain occupies 29 to 216; it reads PATQRVLFLW…AFFAHYGERV (188 aa). Residues R71, 76–79, and K134 each bind ATP; that span reads GAVF. K134 contacts (R)-lipoate.

This sequence belongs to the LplA family. In terms of assembly, monomer.

It is found in the cytoplasm. The catalysed reaction is L-lysyl-[lipoyl-carrier protein] + (R)-lipoate + ATP = N(6)-[(R)-lipoyl]-L-lysyl-[lipoyl-carrier protein] + AMP + diphosphate + H(+). Its pathway is protein modification; protein lipoylation via exogenous pathway; protein N(6)-(lipoyl)lysine from lipoate: step 1/2. It functions in the pathway protein modification; protein lipoylation via exogenous pathway; protein N(6)-(lipoyl)lysine from lipoate: step 2/2. Its function is as follows. Catalyzes both the ATP-dependent activation of exogenously supplied lipoate to lipoyl-AMP and the transfer of the activated lipoyl onto the lipoyl domains of lipoate-dependent enzymes. The chain is Lipoate-protein ligase A from Escherichia coli (strain SMS-3-5 / SECEC).